The sequence spans 96 residues: Maintenance of carboxysome distribution protein B (96 aa).

Over residues 1 to 18 (MTNLEDKLSASIKTENKD) the composition is skewed to basic and acidic residues. The tract at residues 1–96 (MTNLEDKLSA…STHPRRVWPD (96 aa)) is disordered. The segment covering 59–74 (ARATTTKPAVSKSSKP) has biased composition (low complexity).

Monomer, associates with McdA:DNA. Interacts with shell components of the carboxysome.

Its subcellular location is the carboxysome. McdA and McdB together mediate carboxysome positioning on the nucleoid and to prevent their aggregation in the cell. Undergoes liquid-liquid phase separation at pH 7.0 in the presence of crowders polyethylene glycol or Ficoll. McdA is an ATPase that forms dynamic gradients on the nucleoid in response to adapter protein McdB, which associates with carboxysomes. The interplay between McdA gradients on the nucleoid and McdB-bound carboxysomes result in the equal spacing of Cbs along the cell length. Stimulates the ATPase activity of McdA, causing McdA to be released from DNA. Its function is as follows. Incorrect positioning (aggregation) of carboxysomes results in reduced CO(2) fixation by encapsulated form 1 ribulose-1,5-bisphosphate carboxylase (RuBisCO, cbbL/cbbS), which leads to slower growth. The protein is Maintenance of carboxysome distribution protein B of Halothiobacillus neapolitanus (strain ATCC 23641 / c2) (Thiobacillus neapolitanus).